The primary structure comprises 540 residues: CUB domain-containing protein 2 (540 aa).

Residues 1–24 form the signal peptide; that stretch reads MLAELGACLLLAMVLLDSDPGTQA. The Extracellular segment spans residues 25-516; that stretch reads MEGVKCGGVL…GTMVTQDTSD (492 aa). 6 disulfides stabilise this stretch: Cys30-Cys56, Cys83-Cys106, Cys145-Cys171, Cys198-Cys218, Cys257-Cys283, and Cys314-Cys336. 3 CUB domains span residues 30-143, 145-255, and 257-373; these read CGGV…YQKD, CGGV…YFSG, and CQEV…YIGV. N-linked (GlcNAc...) asparagine glycosylation is present at Asn40. The N-linked (GlcNAc...) asparagine glycan is linked to Asn267. N-linked (GlcNAc...) asparagine glycosylation is found at Asn377, Asn435, and Asn436. A helical membrane pass occupies residues 517 to 537; sequence IVFLGLCILAGVLMIIAIVVL. Residues 538 to 540 lie on the Cytoplasmic side of the membrane; that stretch reads MLL.

The protein resides in the membrane. The sequence is that of CUB domain-containing protein 2 (Cdcp2) from Mus musculus (Mouse).